The sequence spans 257 residues: Anti-Pycsar protein Apyc1 (257 aa).

A beta-lactamase-like region spans residues 21-231 (YNNSALVEFS…EDQSRVFLMH (211 aa)). Zn(2+) is bound by residues His64, His66, Asp68, His69, His156, Asp180, and His231.

This sequence belongs to the anti-Pycsar protein Apyc1 family. In terms of assembly, homodimer. Zn(2+) is required as a cofactor.

The enzyme catalyses 3',5'-cyclic CMP + H2O = CMP + H(+). It catalyses the reaction 3',5'-cyclic UMP + H2O = UMP + H(+). Functionally, counteracts the host Pycsar antiviral defense system. Phosphodiesterase that enables metal-dependent hydrolysis of host cyclic nucleotide Pycsar defense signals such as cCMP and cUMP. The chain is Anti-Pycsar protein Apyc1 from Bacillus phage 010DV004.